A 164-amino-acid polypeptide reads, in one-letter code: MQKQHQRQHKVELVANLKSQFADAKALLICDYKGLSVRKLEALRNKARNQGIKVQVIKNTLAHIAMKETGYSDLDLKETNVFLWGDDQIALSKLVFDFQKEHKDHFVLKAGLFDKESVSVAHVEAVSKLPSKEELMGMLLSVWTAPARYFVTGLDNLRKAKEEN.

Belongs to the universal ribosomal protein uL10 family. Part of the ribosomal stalk of the 50S ribosomal subunit. The N-terminus interacts with L11 and the large rRNA to form the base of the stalk. The C-terminus forms an elongated spine to which L12 dimers bind in a sequential fashion forming a multimeric L10(L12)X complex.

Functionally, forms part of the ribosomal stalk, playing a central role in the interaction of the ribosome with GTP-bound translation factors. This chain is Large ribosomal subunit protein uL10, found in Helicobacter pylori (strain HPAG1).